The primary structure comprises 40 residues: Photosystem II reaction center protein J (40 aa).

Residue Met-2 is modified to N-acetylmethionine. The Cytoplasmic portion of the chain corresponds to 2 to 11; the sequence is MSEGGRIPLW. The helical transmembrane segment at 12-26 threads the bilayer; the sequence is IVATVAGMGVIVIVG. Topologically, residues 27–40 are lumenal; the sequence is LFFYGAYAGLGSSL.

Belongs to the PsbJ family. PSII is composed of 1 copy each of membrane proteins PsbA, PsbB, PsbC, PsbD, PsbE, PsbF, PsbH, PsbI, PsbJ, PsbK, PsbL, PsbM, PsbT, PsbX, PsbY, PsbZ, Psb30/Ycf12, peripheral proteins PsbO, CyanoQ (PsbQ), PsbU, PsbV and a large number of cofactors. It forms dimeric complexes. Requires PSII binds multiple chlorophylls, carotenoids and specific lipids. as cofactor.

It is found in the cellular thylakoid membrane. In terms of biological role, one of the components of the core complex of photosystem II (PSII). PSII is a light-driven water:plastoquinone oxidoreductase that uses light energy to abstract electrons from H(2)O, generating O(2) and a proton gradient subsequently used for ATP formation. It consists of a core antenna complex that captures photons, and an electron transfer chain that converts photonic excitation into a charge separation. Functionally, may play a regulatory role in PSII biogenesis. This chain is Photosystem II reaction center protein J, found in Thermosynechococcus vestitus (strain NIES-2133 / IAM M-273 / BP-1).